The primary structure comprises 210 residues: Somatotropin-2 (210 aa).

An N-terminal signal peptide occupies residues 1–22 (MARALVLLSVVLVSLLVNQGRA). Histidine 38 provides a ligand contact to Zn(2+). Residues cysteine 71 and cysteine 183 are joined by a disulfide bond. Glutamate 192 provides a ligand contact to Zn(2+). A disulfide bridge connects residues cysteine 200 and cysteine 208.

It belongs to the somatotropin/prolactin family.

The protein localises to the secreted. Functionally, growth hormone plays an important role in growth control and is involved in the regulation of several anabolic processes. Implicated as an osmoregulatory substance important for seawater adaptation. This is Somatotropin-2 (gh2) from Carassius auratus (Goldfish).